A 205-amino-acid chain; its full sequence is Delta-aminolevulinic acid dehydratase (205 aa).

Zn(2+) is bound by residues C117, C119, and C127. K192 functions as the Schiff-base intermediate with substrate in the catalytic mechanism. R202 is a substrate binding site.

Belongs to the ALAD family. In terms of assembly, homooctamer. It depends on Zn(2+) as a cofactor.

The enzyme catalyses 2 5-aminolevulinate = porphobilinogen + 2 H2O + H(+). Its pathway is porphyrin-containing compound metabolism; protoporphyrin-IX biosynthesis; coproporphyrinogen-III from 5-aminolevulinate: step 1/4. Functionally, catalyzes an early step in the biosynthesis of tetrapyrroles. Binds two molecules of 5-aminolevulinate per subunit, each at a distinct site, and catalyzes their condensation to form porphobilinogen. The chain is Delta-aminolevulinic acid dehydratase (hemB) from Ruminiclostridium josui (Clostridium josui).